The primary structure comprises 131 residues: Transcriptional activator protein (131 aa).

A Nuclear localization signal motif is present at residues 13–28 (KAQHRIAKKRAVRRRR). Residues 33–52 (CGCSIYIHINCAKDGNGFTH) fold into a zinc finger. The tract at residues 78–131 (DVQXGGSTLHAHKDIPHTNPVQPQPEESTKSSQSVPELPSLDGIDSSFWDDIFE) is disordered. Positions 117-131 (SLDGIDSSFWDDIFE) are transactivation.

Belongs to the geminiviridae transcriptional activator protein family. Monomer. Homodimer. Homooligomer. Self-interaction correlates with nuclear localization and efficient activation of transcription. Monomers suppress local silencing by interacting with and inactivating host adenosine kinase 2 (ADK2) in the cytoplasm. Interacts with and inhibits host SNF1 kinase. Binds to ssDNA. Post-translationally, phosphorylated.

The protein localises to the host nucleus. Its subcellular location is the host cytoplasm. Strong activator of the late viral genes promoters. Enhances the expression of the capsid protein and nuclear shuttle protein. Acts as a suppressor of RNA-mediated gene silencing, also known as post-transcriptional gene silencing (PTGS), a mechanism of plant viral defense that limits the accumulation of viral RNAs. Suppresses the host RNA silencing by inhibiting adenosine kinase 2 (ADK2), a kinase involved in a general methylation pathway. Also suppresses the host basal defense by interacting with and inhibiting SNF1 kinase, a key regulator of cell metabolism implicated in innate antiviral defense. Determines pathogenicity. This is Transcriptional activator protein from Cucurbita moschata (Winter crookneck squash).